A 130-amino-acid polypeptide reads, in one-letter code: Small ribosomal subunit protein uS9 (130 aa).

It belongs to the universal ribosomal protein uS9 family.

The protein is Small ribosomal subunit protein uS9 of Streptococcus thermophilus (strain CNRZ 1066).